The following is a 261-amino-acid chain: Non-homologous end joining protein Ku 1 (261 aa).

The 160-residue stretch at 12–171 (SFSLVAIPVQ…LITLHYSDEV (160 aa)) folds into the Ku domain.

The protein belongs to the prokaryotic Ku family. In terms of assembly, homodimer. Interacts with LigD.

Its function is as follows. With LigD forms a non-homologous end joining (NHEJ) DNA repair enzyme, which repairs dsDNA breaks with reduced fidelity. Binds linear dsDNA with 5'- and 3'- overhangs but not closed circular dsDNA nor ssDNA. Recruits and stimulates the ligase activity of LigD. The chain is Non-homologous end joining protein Ku 1 from Geotalea uraniireducens (strain Rf4) (Geobacter uraniireducens).